Reading from the N-terminus, the 518-residue chain is DNA-binding protein Ikaros (518 aa).

The interval 1–51 (METDEAQDMSQVSGKESPPISDVPDDADEPMPVPEDLSTTTGGQQSVKNER) is disordered. The segment covering 37-47 (LSTTTGGQQSV) has biased composition (polar residues). 4 consecutive C2H2-type zinc fingers follow at residues 117–139 (LKCD…NRSH), 145–167 (FQCN…IKLH), 173–195 (FKCH…LRTH), and 201–224 (HKCG…ERCH). The interval 381 to 405 (SVSSERDASPSNSCQDSTDTESNNE) is disordered. C2H2-type zinc fingers lie at residues 461-483 (YKCE…MGCH) and 489-513 (FECN…RGEH).

It belongs to the Ikaros C2H2-type zinc-finger protein family. As to expression, expressed in embryonic hematopoietic organs such as the bursa of Fabricius, thymus and spleen. In the adult, expressed in spleen, thymus, bursa and peripheral blood leukocytes.

It is found in the nucleus. Functionally, binds and activates the enhancer (delta-A element) of the CD3-delta gene. Functions in the specification and the maturation of the T-lymphocyte. Also interacts with a critical control element in the TDT (terminal deoxynucleotidyltransferase) promoter as well as with the promoters for other genes expressed during early stages of B- and T-cell development. Function is isoform-specific and is modulated by dominant-negative inactive isoforms. This is DNA-binding protein Ikaros (IKZF1) from Gallus gallus (Chicken).